The following is a 368-amino-acid chain: Phosphoserine aminotransferase (368 aa).

Arginine 42 serves as a coordination point for L-glutamate. Tryptophan 101, threonine 151, aspartate 175, and glutamine 198 together coordinate pyridoxal 5'-phosphate. At lysine 199 the chain carries N6-(pyridoxal phosphate)lysine. 240–241 (NT) is a pyridoxal 5'-phosphate binding site.

It belongs to the class-V pyridoxal-phosphate-dependent aminotransferase family. SerC subfamily. Homodimer. Pyridoxal 5'-phosphate is required as a cofactor.

It is found in the cytoplasm. The enzyme catalyses O-phospho-L-serine + 2-oxoglutarate = 3-phosphooxypyruvate + L-glutamate. It catalyses the reaction 4-(phosphooxy)-L-threonine + 2-oxoglutarate = (R)-3-hydroxy-2-oxo-4-phosphooxybutanoate + L-glutamate. It participates in amino-acid biosynthesis; L-serine biosynthesis; L-serine from 3-phospho-D-glycerate: step 2/3. It functions in the pathway cofactor biosynthesis; pyridoxine 5'-phosphate biosynthesis; pyridoxine 5'-phosphate from D-erythrose 4-phosphate: step 3/5. Its function is as follows. Catalyzes the reversible conversion of 3-phosphohydroxypyruvate to phosphoserine and of 3-hydroxy-2-oxo-4-phosphonooxybutanoate to phosphohydroxythreonine. The chain is Phosphoserine aminotransferase from Polaromonas sp. (strain JS666 / ATCC BAA-500).